The chain runs to 177 residues: NAD(P)H-quinone oxidoreductase subunit 6, chloroplastic (177 aa).

The next 5 helical transmembrane spans lie at 10 to 30 (ILLVSLGSGIILGSLGVVLLT), 32 to 52 (PIYSAFSSGLVLVRISLFHIL), 61 to 81 (AQLLIYVGAINVLIIFAVMFM), 93 to 115 (WTVGDGISSVVCTSILFSLIATI), and 152 to 172 (FFLPFELISIILLVALVGAIA).

Belongs to the complex I subunit 6 family. NDH is composed of at least 16 different subunits, 5 of which are encoded in the nucleus.

It is found in the plastid. The protein resides in the chloroplast thylakoid membrane. The catalysed reaction is a plastoquinone + NADH + (n+1) H(+)(in) = a plastoquinol + NAD(+) + n H(+)(out). It catalyses the reaction a plastoquinone + NADPH + (n+1) H(+)(in) = a plastoquinol + NADP(+) + n H(+)(out). Its function is as follows. NDH shuttles electrons from NAD(P)H:plastoquinone, via FMN and iron-sulfur (Fe-S) centers, to quinones in the photosynthetic chain and possibly in a chloroplast respiratory chain. The immediate electron acceptor for the enzyme in this species is believed to be plastoquinone. Couples the redox reaction to proton translocation, and thus conserves the redox energy in a proton gradient. In Amborella trichopoda, this protein is NAD(P)H-quinone oxidoreductase subunit 6, chloroplastic (ndhG).